Reading from the N-terminus, the 117-residue chain is Ribonuclease P protein component (117 aa).

This sequence belongs to the RnpA family. In terms of assembly, consists of a catalytic RNA component (M1 or rnpB) and a protein subunit.

The enzyme catalyses Endonucleolytic cleavage of RNA, removing 5'-extranucleotides from tRNA precursor.. RNaseP catalyzes the removal of the 5'-leader sequence from pre-tRNA to produce the mature 5'-terminus. It can also cleave other RNA substrates such as 4.5S RNA. The protein component plays an auxiliary but essential role in vivo by binding to the 5'-leader sequence and broadening the substrate specificity of the ribozyme. The sequence is that of Ribonuclease P protein component from Staphylococcus aureus (strain bovine RF122 / ET3-1).